We begin with the raw amino-acid sequence, 363 residues long: Phosphoserine aminotransferase (363 aa).

L-glutamate is bound at residue Arg-42. Residues 76–77, Trp-102, Thr-156, Asp-175, and Gln-198 each bind pyridoxal 5'-phosphate; that span reads GR. Lys-199 is subject to N6-(pyridoxal phosphate)lysine. 240–241 lines the pyridoxal 5'-phosphate pocket; the sequence is NT.

The protein belongs to the class-V pyridoxal-phosphate-dependent aminotransferase family. SerC subfamily. Homodimer. Pyridoxal 5'-phosphate is required as a cofactor.

It localises to the cytoplasm. The catalysed reaction is O-phospho-L-serine + 2-oxoglutarate = 3-phosphooxypyruvate + L-glutamate. The enzyme catalyses 4-(phosphooxy)-L-threonine + 2-oxoglutarate = (R)-3-hydroxy-2-oxo-4-phosphooxybutanoate + L-glutamate. It functions in the pathway amino-acid biosynthesis; L-serine biosynthesis; L-serine from 3-phospho-D-glycerate: step 2/3. It participates in cofactor biosynthesis; pyridoxine 5'-phosphate biosynthesis; pyridoxine 5'-phosphate from D-erythrose 4-phosphate: step 3/5. In terms of biological role, catalyzes the reversible conversion of 3-phosphohydroxypyruvate to phosphoserine and of 3-hydroxy-2-oxo-4-phosphonooxybutanoate to phosphohydroxythreonine. In Shewanella baltica (strain OS185), this protein is Phosphoserine aminotransferase.